Reading from the N-terminus, the 327-residue chain is Aromatase (327 aa).

C315 is a heme binding site.

The protein belongs to the cytochrome P450 family. Requires heme as cofactor.

It is found in the membrane. The enzyme catalyses testosterone + 3 reduced [NADPH--hemoprotein reductase] + 3 O2 = 17beta-estradiol + formate + 3 oxidized [NADPH--hemoprotein reductase] + 4 H2O + 4 H(+). It catalyses the reaction androst-4-ene-3,17-dione + 3 reduced [NADPH--hemoprotein reductase] + 3 O2 = estrone + formate + 3 oxidized [NADPH--hemoprotein reductase] + 4 H2O + 4 H(+). Its function is as follows. Catalyzes the formation of aromatic C18 estrogens from C19 androgens. The polypeptide is Aromatase (CYP19A1) (Coturnix japonica (Japanese quail)).